The primary structure comprises 906 residues: Coatomer subunit beta' (906 aa).

WD repeat units follow at residues 13–52 (ARSD…LVKT), 55–94 (VCDL…RVHM), 97–136 (AHSD…SCSQ), 140–180 (GHTH…PNFT), 183–224 (GHEK…CVQT), 227–266 (GHAQ…LEST), 350–388 (SCEI…NKSF), and 390–425 (SAQE…KSFK). Lys627 carries the post-translational modification N6-acetyllysine. The stretch at 746–783 (IRTGRLPEAAFLARTYLPSQVSRVVKLWRENLSKVNQK) is one WD 9 repeat. A disordered region spans residues 837 to 872 (EEAKGFQPSRSAAQQELDGKPASPTPVIVTSQTANK). Ser859 is modified (phosphoserine). Residue Thr861 is modified to Phosphothreonine. A coiled-coil region spans residues 866–891 (TSQTANKEEKSLLELEVDLDNLEIED).

It belongs to the WD repeat COPB2 family. As to quaternary structure, oligomeric complex that consists of at least the alpha, beta, beta', gamma, delta, epsilon and zeta subunits. Probably interacts with PEX11A. Interacts with SCYL1. Interacts with JAGN1.

It localises to the cytoplasm. The protein localises to the cytosol. The protein resides in the golgi apparatus membrane. It is found in the cytoplasmic vesicle. Its subcellular location is the COPI-coated vesicle membrane. In terms of biological role, the coatomer is a cytosolic protein complex that binds to dilysine motifs and reversibly associates with Golgi non-clathrin-coated vesicles, which further mediate biosynthetic protein transport from the ER, via the Golgi up to the trans Golgi network. Coatomer complex is required for budding from Golgi membranes, and is essential for the retrograde Golgi-to-ER transport of dilysine-tagged proteins. In mammals, the coatomer can only be recruited by membranes associated to ADP-ribosylation factors (ARFs), which are small GTP-binding proteins; the complex also influences the Golgi structural integrity, as well as the processing, activity, and endocytic recycling of LDL receptors. Its function is as follows. This coatomer complex protein, essential for Golgi budding and vesicular trafficking, is a selective binding protein (RACK) for protein kinase C, epsilon type. It binds to Golgi membranes in a GTP-dependent manner. In Bos taurus (Bovine), this protein is Coatomer subunit beta' (COPB2).